The following is a 264-amino-acid chain: Cell division protein FtsQ (264 aa).

Positions 1 to 24 are disordered; it reads MAGPTTAERGARQQESSGPPRVRR. Residues 1-32 are Cytoplasmic-facing; sequence MAGPTTAERGARQQESSGPPRVRRFRPPRLRT. The helical transmembrane segment at 33 to 53 threads the bilayer; sequence IIILAVALVLVAGGTVWVLYG. Topologically, residues 54–264 are extracellular; that stretch reads SNWTRLERVS…VATAPASSGS (211 aa). Residues 57–126 enclose the POTRA domain; sequence TRLERVSVSG…HGIGLKVTER (70 aa).

The protein belongs to the FtsQ/DivIB family. FtsQ subfamily.

The protein localises to the cell membrane. Its function is as follows. Essential cell division protein. The chain is Cell division protein FtsQ from Streptomyces coelicolor (strain ATCC BAA-471 / A3(2) / M145).